Consider the following 301-residue polypeptide: Probable alpha-L-glutamate ligase (301 aa).

Positions 104–287 (LQLLSRRGIG…VAGMIIEHLE (184 aa)) constitute an ATP-grasp domain. ATP contacts are provided by residues K141, 178-179 (EY), D187, and 211-213 (RSN). Mg(2+) contacts are provided by D248, E260, and N262. Residues D248, E260, and N262 each coordinate Mn(2+).

Belongs to the RimK family. Mg(2+) is required as a cofactor. Requires Mn(2+) as cofactor.

The chain is Probable alpha-L-glutamate ligase from Pseudomonas putida (strain ATCC 700007 / DSM 6899 / JCM 31910 / BCRC 17059 / LMG 24140 / F1).